The primary structure comprises 90 residues: uncharacterized protein (90 aa).

The next 2 membrane-spanning stretches (helical) occupy residues 23-43 (ITTI…VGLF) and 48-68 (VTLL…IIGF).

Its subcellular location is the cell membrane. This is an uncharacterized protein from Rickettsia prowazekii (strain Madrid E).